The sequence spans 804 residues: Endoplasmin (804 aa).

A signal peptide spans 1–21; that stretch reads MRALWVLGLCCVLLTFGSVRA. Residues 42-44 carry the SRT pseudosubstrate motif motif; sequence SRT. The N-linked (GlcNAc...) asparagine glycan is linked to Asn-62. At Ser-64 the chain carries Phosphoserine. Residue Asn-107 is glycosylated (N-linked (GlcNAc...) asparagine). The ATP site is built by Asn-107, Asp-149, and Asn-162. N6-(2-hydroxyisobutyryl)lysine is present on Lys-168. The residue at position 172 (Ser-172) is a Phosphoserine. Phe-199 is an ATP binding site. Asn-217 carries an N-linked (GlcNAc...) asparagine glycan. The interval 288 to 323 is disordered; it reads TVEEPAEEEEAAKEDKEESDDEAAVEEEEDEKKPKT. Residues 289–317 are compositionally biased toward acidic residues; the sequence is VEEPAEEEEAAKEDKEESDDEAAVEEEED. A phosphoserine mark is found at Ser-306 and Ser-403. Residue Lys-404 is modified to N6-succinyllysine. An N-linked (GlcNAc...) asparagine glycan is attached at Asn-445. At Ser-447 the chain carries Phosphoserine. N6-acetyllysine is present on Lys-479. N-linked (GlcNAc...) asparagine glycosylation is found at Asn-481 and Asn-502. Lys-633 bears the N6-succinyllysine mark. The disordered stretch occupies residues 750–804; sequence DPDAKVEEEPEEEPEETTEDTAEDTEQDEEEEMDAGTDEEEQETAEKSTAEKDEL. A compositionally biased stretch (acidic residues) spans 757 to 792; it reads EEPEEEPEETTEDTAEDTEQDEEEEMDAGTDEEEQE. Thr-786 carries the phosphothreonine modification. Residues 793-804 show a composition bias toward basic and acidic residues; the sequence is TAEKSTAEKDEL. The Prevents secretion from ER signature appears at 801 to 804; sequence KDEL.

It belongs to the heat shock protein 90 family. As to quaternary structure, homodimer; disulfide-linked. Component of an EIF2 complex at least composed of CELF1/CUGBP1, CALR, CALR3, EIF2S1, EIF2S2, HSP90B1 and HSPA5. Part of a large chaperone multiprotein complex comprising DNAJB11, HSP90B1, HSPA5, HYOU, PDIA2, PDIA4, PDIA6, PPIB, SDF2L1, UGGT1 and very small amounts of ERP29, but not, or at very low levels, CALR nor CANX. Interacts with AIMP1; regulates its retention in the endoplasmic reticulum. Hyperglycosylated form interacts with OS9; promoting its degradation by the endoplasmic reticulum associated degradation (ERAD). Interacts with CNPY3. This interaction is disrupted in the presence of ATP. Interacts with TLR4 and TLR9, but not with TLR3. Interacts with MZB1 in a calcium-dependent manner. Interacts with METTL23. Interacts with IL1B; the interaction facilitates cargo translocation into the ERGIC. Interacts with EIF2AK3. In terms of processing, phosphorylated by CK2. N-glycosylated cotranslationally at Asn-217 by STT3A-containing OST-A complex: this glycosylation is constitutive. In response to various stress, 5 additional facultative sites (Asn-62, Asn-107, Asn-445, Asn-481 and Asn-502) can be glycosylated post-translationally by STT3B-containing OST-B complex, leading to a hyperglycosylated form that is degraded by the ER-associated degradation (ERAD) pathway. In normal conditions, the OST-A complex together with CCDC134 prevent glycosylation at facultative sites during protein folding, thereby preventing hyperglycosylation. Mechanistically, nascent HSP90B1 is tethered during translation to a specialized CCDC134-containing translocon that forms a microenvironment for its folding, in which STT3A associates with the SRT pseudosubstrate motif, and prevents access to facultative glycosylation sites until folding is completed, rendering its facultative sites inaccessible to the OST-B complex.

It is found in the endoplasmic reticulum lumen. The protein resides in the sarcoplasmic reticulum lumen. The protein localises to the melanosome. It carries out the reaction ATP + H2O = ADP + phosphate + H(+). Its function is as follows. ATP-dependent chaperone involved in the processing of proteins in the endoplasmic reticulum, regulating their transport. Together with MESD, acts as a modulator of the Wnt pathway by promoting the folding of LRP6, a coreceptor of the canonical Wnt pathway. When associated with CNPY3, required for proper folding of Toll-like receptors. Promotes folding and trafficking of TLR4 to the cell surface. May participate in the unfolding of cytosolic leaderless cargos (lacking the secretion signal sequence) such as the interleukin 1/IL-1 to facilitate their translocation into the ERGIC (endoplasmic reticulum-Golgi intermediate compartment) and secretion; the translocation process is mediated by the cargo receptor TMED10. The chain is Endoplasmin (HSP90B1) from Bos taurus (Bovine).